The primary structure comprises 169 residues: S-ribosylhomocysteine lyase (169 aa).

Fe cation is bound by residues H54, H58, and C128.

It belongs to the LuxS family. Homodimer. Fe cation is required as a cofactor.

The enzyme catalyses S-(5-deoxy-D-ribos-5-yl)-L-homocysteine = (S)-4,5-dihydroxypentane-2,3-dione + L-homocysteine. Involved in the synthesis of autoinducer 2 (AI-2) which is secreted by bacteria and is used to communicate both the cell density and the metabolic potential of the environment. The regulation of gene expression in response to changes in cell density is called quorum sensing. Catalyzes the transformation of S-ribosylhomocysteine (RHC) to homocysteine (HC) and 4,5-dihydroxy-2,3-pentadione (DPD). This is S-ribosylhomocysteine lyase from Shewanella sp. (strain MR-4).